Here is a 282-residue protein sequence, read N- to C-terminus: V-set domain-containing T-cell activation inhibitor 1 (282 aa).

The N-terminal stretch at 1-24 is a signal peptide; the sequence is MASLGQILFWSIISIIIILAGAIA. Topologically, residues 25–259 are extracellular; it reads LIIGFGISGR…HLQLLNSKAS (235 aa). Ig-like V-type domains are found at residues 35–146 and 153–241; these read HSIT…LEYK and PEVN…IKVT. 2 disulfides stabilise this stretch: Cys56–Cys130 and Cys168–Cys225. The N-linked (GlcNAc...) asparagine glycan is linked to Asn216. The helical transmembrane segment at 260–280 threads the bilayer; that stretch reads LCVSSFFAISWALLPLSPYLM. Topologically, residues 281–282 are cytoplasmic; sequence LK.

It belongs to the immunoglobulin superfamily. BTN/MOG family. Post-translationally, N-glycosylated. As to expression, overexpressed in breast, ovarian, endometrial, renal cell (RCC) and non-small-cell lung cancers (NSCLC). Expressed on activated T- and B-cells, monocytes and dendritic cells, but not expressed in most normal tissues (at protein level). Widely expressed, including in kidney, liver, lung, ovary, placenta, spleen and testis.

The protein localises to the cell membrane. Functionally, negatively regulates T-cell-mediated immune response by inhibiting T-cell activation, proliferation, cytokine production and development of cytotoxicity. When expressed on the cell surface of tumor macrophages, plays an important role, together with regulatory T-cells (Treg), in the suppression of tumor-associated antigen-specific T-cell immunity. Involved in promoting epithelial cell transformation. This is V-set domain-containing T-cell activation inhibitor 1 from Homo sapiens (Human).